Consider the following 568-residue polypeptide: Glucose-6-phosphate isomerase, cytosolic 1 (568 aa).

The Proton donor role is filled by E360. Active-site residues include H391 and K516.

The protein belongs to the GPI family. In terms of assembly, homodimer.

The protein localises to the cytoplasm. The enzyme catalyses alpha-D-glucose 6-phosphate = beta-D-fructose 6-phosphate. The protein operates within carbohydrate degradation; glycolysis; D-glyceraldehyde 3-phosphate and glycerone phosphate from D-glucose: step 2/4. This is Glucose-6-phosphate isomerase, cytosolic 1 (PGIC1) from Clarkia mildrediae.